A 358-amino-acid polypeptide reads, in one-letter code: Arginine kinase (358 aa).

The Phosphagen kinase N-terminal domain maps to 2–84 (SDADLFSKLD…LDEVIKDYHK (83 aa)). 57–61 (GVGIY) is a binding site for substrate. The Phosphagen kinase C-terminal domain occupies 112 to 350 (FIVSTRVRVG…EEILKREKEL (239 aa)). Residues 115 to 119 (STRVR) and His-178 contribute to the ATP site. Glu-218 contacts substrate. Arg-222 provides a ligand contact to ATP. Cys-265 contacts substrate. Residues 274–278 (RASVH) and 303–308 (RGIHGE) contribute to the ATP site. Substrate is bound at residue Glu-308.

The protein belongs to the ATP:guanido phosphotransferase family.

The catalysed reaction is L-arginine + ATP = N(omega)-phospho-L-arginine + ADP + H(+). This chain is Arginine kinase, found in Turbo cornutus (Horned turban).